The primary structure comprises 201 residues: Recombination protein RecR (201 aa).

A C4-type zinc finger spans residues 60–75 (CATCGNFDTVQPCAVC). Positions 83 to 178 (GIICVVEDVP…DVTRLAHGVP (96 aa)) constitute a Toprim domain.

The protein belongs to the RecR family.

Its function is as follows. May play a role in DNA repair. It seems to be involved in an RecBC-independent recombinational process of DNA repair. It may act with RecF and RecO. This is Recombination protein RecR from Hyphomonas neptunium (strain ATCC 15444).